The primary structure comprises 358 residues: tRNA N6-adenosine threonylcarbamoyltransferase (358 aa).

Fe cation is bound by residues His111 and His115. Residues 146–150, Asp179, Gly192, and Asn294 contribute to the substrate site; that span reads LVSGG. Asp322 is a binding site for Fe cation.

The protein belongs to the KAE1 / TsaD family. The cofactor is Fe(2+).

It is found in the cytoplasm. It carries out the reaction L-threonylcarbamoyladenylate + adenosine(37) in tRNA = N(6)-L-threonylcarbamoyladenosine(37) in tRNA + AMP + H(+). Its function is as follows. Required for the formation of a threonylcarbamoyl group on adenosine at position 37 (t(6)A37) in tRNAs that read codons beginning with adenine. Is involved in the transfer of the threonylcarbamoyl moiety of threonylcarbamoyl-AMP (TC-AMP) to the N6 group of A37, together with TsaE and TsaB. TsaD likely plays a direct catalytic role in this reaction. The chain is tRNA N6-adenosine threonylcarbamoyltransferase from Helicobacter hepaticus (strain ATCC 51449 / 3B1).